Reading from the N-terminus, the 896-residue chain is Protein translocase subunit SecA (896 aa).

ATP-binding positions include Gln87, 105 to 109 (GEGKT), and Asp512. Residues 867–889 (QEPARSNRVAGRNDPCPCGSGKK) form a disordered region. The Zn(2+) site is built by Cys882, Cys884, Cys893, and Cys894.

Belongs to the SecA family. Monomer and homodimer. Part of the essential Sec protein translocation apparatus which comprises SecA, SecYEG and auxiliary proteins SecDF-YajC and YidC. Zn(2+) is required as a cofactor.

The protein localises to the cell inner membrane. The protein resides in the cytoplasm. It catalyses the reaction ATP + H2O + cellular proteinSide 1 = ADP + phosphate + cellular proteinSide 2.. Part of the Sec protein translocase complex. Interacts with the SecYEG preprotein conducting channel. Has a central role in coupling the hydrolysis of ATP to the transfer of proteins into and across the cell membrane, serving as an ATP-driven molecular motor driving the stepwise translocation of polypeptide chains across the membrane. This is Protein translocase subunit SecA from Pelobacter propionicus (strain DSM 2379 / NBRC 103807 / OttBd1).